Consider the following 209-residue polypeptide: Uracil phosphoribosyltransferase (209 aa).

5-phospho-alpha-D-ribose 1-diphosphate-binding positions include Arg78, Arg103, and 130–138; that span reads DPMLATAGS. Uracil-binding positions include Ile193 and 198–200; that span reads GDA. Asp199 serves as a coordination point for 5-phospho-alpha-D-ribose 1-diphosphate.

It belongs to the UPRTase family. It depends on Mg(2+) as a cofactor.

The catalysed reaction is UMP + diphosphate = 5-phospho-alpha-D-ribose 1-diphosphate + uracil. The protein operates within pyrimidine metabolism; UMP biosynthesis via salvage pathway; UMP from uracil: step 1/1. Allosterically activated by GTP. Catalyzes the conversion of uracil and 5-phospho-alpha-D-ribose 1-diphosphate (PRPP) to UMP and diphosphate. The protein is Uracil phosphoribosyltransferase of Methylibium petroleiphilum (strain ATCC BAA-1232 / LMG 22953 / PM1).